The chain runs to 357 residues: Protein RecA (357 aa).

Position 71-78 (71-78 (GPESSGKT)) interacts with ATP.

The protein belongs to the RecA family.

It is found in the cytoplasm. In terms of biological role, can catalyze the hydrolysis of ATP in the presence of single-stranded DNA, the ATP-dependent uptake of single-stranded DNA by duplex DNA, and the ATP-dependent hybridization of homologous single-stranded DNAs. It interacts with LexA causing its activation and leading to its autocatalytic cleavage. In Ehrlichia ruminantium (strain Gardel), this protein is Protein RecA.